Here is a 237-residue protein sequence, read N- to C-terminus: Regulator of G-protein signaling 9-binding protein (237 aa).

Residues 1 to 214 (MAKEECKALL…TGPCDLSKAK (214 aa)) lie on the Cytoplasmic side of the membrane. 2 coiled-coil regions span residues 29-58 (GSADSQNLREELQKTRQKAQELAVAIRLRL) and 144-169 (VEDLHQLEREILQVGEMIQDMEMKVN). The segment at 153 to 202 (EILQVGEMIQDMEMKVNVPRWTVQARQAAGAELLSSASAGVSSVGGVSVE) is SNARE-like. A helical; Anchor for type IV membrane protein membrane pass occupies residues 215–234 (AATIFSAVLLAAVALAVCVA). Over 235 to 237 (KLS) the chain is Extracellular.

It belongs to the RGS7BP/RGS9BP family. As to quaternary structure, specifically interacts with isoform RGS9-1 of RGS9. Component of the RGS9-1-Gbeta5 complex composed of RGS9-1, Gbeta5 (GNB5) and RGS9BP. As to expression, specifically expressed in the retina. Only present in photoreceptors (at protein level).

It is found in the membrane. Regulator of G protein-coupled receptor (GPCR) signaling in phototransduction. Participates in the recovery phase of visual transduction via its interaction with RGS9-1 isoform. Acts as a membrane-anchor that mediates the targeting of RGS9-1 to the photoreceptor outer segment, where phototransduction takes place. Enhances the ability of RGS9-1 to stimulate G protein GTPase activity, allowing the visual signal to be terminated on the physiologically time scale. It also controls the proteolytic stability of RGS9-1, probably by protecting it from degradation. The protein is Regulator of G-protein signaling 9-binding protein (RGS9BP) of Bos taurus (Bovine).